A 248-amino-acid polypeptide reads, in one-letter code: 4-hydroxy-tetrahydrodipicolinate reductase (248 aa).

NAD(+) contacts are provided by residues 9 to 14 (GAQGRV), 77 to 79 (GTT), and 104 to 107 (APNF). Histidine 134 acts as the Proton donor/acceptor in catalysis. Position 135 (histidine 135) interacts with (S)-2,3,4,5-tetrahydrodipicolinate. Catalysis depends on lysine 138, which acts as the Proton donor. 144–145 (GT) contributes to the (S)-2,3,4,5-tetrahydrodipicolinate binding site. A disordered region spans residues 157–176 (RREAGMPTQPDATEQSLDGA).

This sequence belongs to the DapB family.

It is found in the cytoplasm. The catalysed reaction is (S)-2,3,4,5-tetrahydrodipicolinate + NAD(+) + H2O = (2S,4S)-4-hydroxy-2,3,4,5-tetrahydrodipicolinate + NADH + H(+). It carries out the reaction (S)-2,3,4,5-tetrahydrodipicolinate + NADP(+) + H2O = (2S,4S)-4-hydroxy-2,3,4,5-tetrahydrodipicolinate + NADPH + H(+). Its pathway is amino-acid biosynthesis; L-lysine biosynthesis via DAP pathway; (S)-tetrahydrodipicolinate from L-aspartate: step 4/4. Catalyzes the conversion of 4-hydroxy-tetrahydrodipicolinate (HTPA) to tetrahydrodipicolinate. The sequence is that of 4-hydroxy-tetrahydrodipicolinate reductase from Corynebacterium diphtheriae (strain ATCC 700971 / NCTC 13129 / Biotype gravis).